The following is a 274-amino-acid chain: MTHQTHAYHMVNPSPWPLTGALSALLMTSGLAMWFHFNSSMLLSLGMLTNLLTMYQWWRDIVREGTFQGHHTSIVQKGLRYGMVLFIISEIFFFAGFFWAFYHSSLAPTPELGGCWPPTGIHPLNPLEVPLLNTAVLLASGVSITWAHHSLMEGNRVQMLQALLITITLGLYFTLLQASEYFETSFTISDGVYGSTFFMATGFHGLHVIIGSTFLTVCFFRQLSFHFTSNHHFGFEAAAWYWHFVDVVWLFLYVSIYWWGSYSFSIDPMQLTSN.

Residues 1-15 (MTHQTHAYHMVNPSP) lie on the Mitochondrial matrix side of the membrane. Residues 16–34 (WPLTGALSALLMTSGLAMW) traverse the membrane as a helical segment. At 35–40 (FHFNSS) the chain is on the mitochondrial intermembrane side. A helical membrane pass occupies residues 41–66 (MLLSLGMLTNLLTMYQWWRDIVREGT). Over 67–72 (FQGHHT) the chain is Mitochondrial matrix. The chain crosses the membrane as a helical span at residues 73–105 (SIVQKGLRYGMVLFIISEIFFFAGFFWAFYHSS). At 106-128 (LAPTPELGGCWPPTGIHPLNPLE) the chain is on the mitochondrial intermembrane side. Residues 129 to 152 (VPLLNTAVLLASGVSITWAHHSLM) form a helical membrane-spanning segment. Over 153–155 (EGN) the chain is Mitochondrial matrix. A helical transmembrane segment spans residues 156–183 (RVQMLQALLITITLGLYFTLLQASEYFE). At 184–190 (TSFTISD) the chain is on the mitochondrial intermembrane side. Residues 191-223 (GVYGSTFFMATGFHGLHVIIGSTFLTVCFFRQL) form a helical membrane-spanning segment. The Mitochondrial matrix segment spans residues 224 to 232 (SFHFTSNHH). The chain crosses the membrane as a helical span at residues 233 to 256 (FGFEAAAWYWHFVDVVWLFLYVSI). Topologically, residues 257-274 (YWWGSYSFSIDPMQLTSN) are mitochondrial intermembrane.

This sequence belongs to the cytochrome c oxidase subunit 3 family. Component of the cytochrome c oxidase (complex IV, CIV), a multisubunit enzyme composed of 14 subunits. The complex is composed of a catalytic core of 3 subunits MT-CO1, MT-CO2 and MT-CO3, encoded in the mitochondrial DNA, and 11 supernumerary subunits COX4I, COX5A, COX5B, COX6A, COX6B, COX6C, COX7A, COX7B, COX7C, COX8 and NDUFA4, which are encoded in the nuclear genome. The complex exists as a monomer or a dimer and forms supercomplexes (SCs) in the inner mitochondrial membrane with NADH-ubiquinone oxidoreductase (complex I, CI) and ubiquinol-cytochrome c oxidoreductase (cytochrome b-c1 complex, complex III, CIII), resulting in different assemblies (supercomplex SCI(1)III(2)IV(1) and megacomplex MCI(2)III(2)IV(2)).

The protein resides in the mitochondrion inner membrane. The enzyme catalyses 4 Fe(II)-[cytochrome c] + O2 + 8 H(+)(in) = 4 Fe(III)-[cytochrome c] + 2 H2O + 4 H(+)(out). Its function is as follows. Component of the cytochrome c oxidase, the last enzyme in the mitochondrial electron transport chain which drives oxidative phosphorylation. The respiratory chain contains 3 multisubunit complexes succinate dehydrogenase (complex II, CII), ubiquinol-cytochrome c oxidoreductase (cytochrome b-c1 complex, complex III, CIII) and cytochrome c oxidase (complex IV, CIV), that cooperate to transfer electrons derived from NADH and succinate to molecular oxygen, creating an electrochemical gradient over the inner membrane that drives transmembrane transport and the ATP synthase. Cytochrome c oxidase is the component of the respiratory chain that catalyzes the reduction of oxygen to water. Electrons originating from reduced cytochrome c in the intermembrane space (IMS) are transferred via the dinuclear copper A center (CU(A)) of subunit 2 and heme A of subunit 1 to the active site in subunit 1, a binuclear center (BNC) formed by heme A3 and copper B (CU(B)). The BNC reduces molecular oxygen to 2 water molecules using 4 electrons from cytochrome c in the IMS and 4 protons from the mitochondrial matrix. This chain is Cytochrome c oxidase subunit 3 (MT-CO3), found in Lemur catta (Ring-tailed lemur).